The following is a 209-amino-acid chain: Imidazoleglycerol-phosphate dehydratase (209 aa).

Positions 1-23 (MQLSDRPLTAPGTAPRQATVSRR) are disordered.

Belongs to the imidazoleglycerol-phosphate dehydratase family.

It localises to the cytoplasm. It carries out the reaction D-erythro-1-(imidazol-4-yl)glycerol 3-phosphate = 3-(imidazol-4-yl)-2-oxopropyl phosphate + H2O. The protein operates within amino-acid biosynthesis; L-histidine biosynthesis; L-histidine from 5-phospho-alpha-D-ribose 1-diphosphate: step 6/9. The protein is Imidazoleglycerol-phosphate dehydratase of Synechococcus elongatus (strain ATCC 33912 / PCC 7942 / FACHB-805) (Anacystis nidulans R2).